The following is a 226-amino-acid chain: PKHD-type hydroxylase PFL_0865 (226 aa).

A Fe2OG dioxygenase domain is found at 78 to 178 (KVFPPLINCY…RYASFFWTQS (101 aa)). Residues His-96, Asp-98, and His-159 each coordinate Fe cation. Residue Arg-169 participates in 2-oxoglutarate binding.

Fe(2+) is required as a cofactor. It depends on L-ascorbate as a cofactor.

In Pseudomonas fluorescens (strain ATCC BAA-477 / NRRL B-23932 / Pf-5), this protein is PKHD-type hydroxylase PFL_0865.